The sequence spans 223 residues: Urease accessory protein UreF (223 aa).

This sequence belongs to the UreF family. In terms of assembly, ureD, UreF and UreG form a complex that acts as a GTP-hydrolysis-dependent molecular chaperone, activating the urease apoprotein by helping to assemble the nickel containing metallocenter of UreC. The UreE protein probably delivers the nickel.

It localises to the cytoplasm. Required for maturation of urease via the functional incorporation of the urease nickel metallocenter. In Agrobacterium fabrum (strain C58 / ATCC 33970) (Agrobacterium tumefaciens (strain C58)), this protein is Urease accessory protein UreF.